We begin with the raw amino-acid sequence, 212 residues long: Probable GTP-binding protein EngB (212 aa).

The 173-residue stretch at 38 to 210 folds into the EngB-type G domain; it reads SLPEIAFVGK…KASLAKCIKP (173 aa). GTP-binding positions include 46–53, 73–77, 91–94, 158–161, and 189–191; these read GKSNVGKS, GRTRQ, DLPG, TKSD, and VSN. Mg(2+) contacts are provided by Ser-53 and Thr-75.

It belongs to the TRAFAC class TrmE-Era-EngA-EngB-Septin-like GTPase superfamily. EngB GTPase family. Requires Mg(2+) as cofactor.

Functionally, necessary for normal cell division and for the maintenance of normal septation. This is Probable GTP-binding protein EngB from Rickettsia africae (strain ESF-5).